The primary structure comprises 248 residues: Triosephosphate isomerase A (248 aa).

Asn11 and Lys13 together coordinate substrate. His95 functions as the Electrophile in the catalytic mechanism. Glu165 serves as the catalytic Proton acceptor.

It belongs to the triosephosphate isomerase family. Homodimer.

Its subcellular location is the cytoplasm. The catalysed reaction is dihydroxyacetone phosphate = methylglyoxal + phosphate. It catalyses the reaction D-glyceraldehyde 3-phosphate = dihydroxyacetone phosphate. The protein operates within carbohydrate degradation; glycolysis; D-glyceraldehyde 3-phosphate from glycerone phosphate: step 1/1. It functions in the pathway carbohydrate biosynthesis; gluconeogenesis. In terms of biological role, triosephosphate isomerase is an extremely efficient metabolic enzyme that catalyzes the interconversion between dihydroxyacetone phosphate (DHAP) and D-glyceraldehyde-3-phosphate (G3P) in glycolysis and gluconeogenesis. It is also responsible for the non-negligible production of methylglyoxal a reactive cytotoxic side-product that modifies and can alter proteins, DNA and lipids. The chain is Triosephosphate isomerase A (tpi1a) from Danio rerio (Zebrafish).